A 244-amino-acid chain; its full sequence is Mitophagy receptor atg43 (244 aa).

The disordered stretch occupies residues 1 to 24 (MSSESKGIPIPRSDSNKTSDVSSW). The Cytoplasmic segment spans residues 1 to 198 (MSSESKGIPI…LVALITLRDH (198 aa)). The atg8 interacting motif (AIM) motif lies at 28–31 (YELI). The interval 105 to 131 (SLSLLQSKEEDDSSNWETEDSESAVEE) is disordered. Over residues 113-131 (EEDDSSNWETEDSESAVEE) the composition is skewed to acidic residues. The involved in MIM complex binding. Required for normal vegetative cell population growth but is dispensable for mitophagy stretch occupies residues 165–184 (PPIPDLRFQQSYLQSIQRAN). Residues 199–215 (VLYPFLSGGMWVFVRHI) traverse the membrane as a helical segment. The Mitochondrial intermembrane portion of the chain corresponds to 216 to 244 (FQFLKLQEKGFHFGQSLRRNLGLFSTFKD).

As to quaternary structure, interacts (via N-terminal atg8 interacting motif) with atg8; the interaction is direct. Interacts with the mitochondrial outer import machinery (MIM) complex subunits mim1 and mim2.

The protein resides in the mitochondrion outer membrane. Its function is as follows. Mitophagy receptor that tethers atg8 to the mitochondrial outer membrane to promote selective autophagy. The chain is Mitophagy receptor atg43 from Schizosaccharomyces pombe (strain 972 / ATCC 24843) (Fission yeast).